We begin with the raw amino-acid sequence, 335 residues long: Dolichyl-diphosphooligosaccharide--protein glycosyltransferase subunit MAGT1 (335 aa).

The N-terminal stretch at 1 to 29 (MAARWRFWCVSVTMVVALLIVCDVPSASA) is a signal peptide. At 30-184 (QRKKEMVLSE…DVNIRVIRPP (155 aa)) the chain is on the extracellular side. In terms of domain architecture, Thioredoxin spans 47–175 (WTNKRPVIRM…IARWIADRTD (129 aa)). N71 is a glycosylation site (N-linked (GlcNAc...) asparagine). C87 and C90 are oxidised to a cystine. The chain crosses the membrane as a helical span at residues 185 to 205 (NYAGPLMLGLLLAVIGGLVYL). Residues 206 to 209 (RRSN) are Cytoplasmic-facing. Residues 210–230 (MEFLFNKTGWAFAALCFVLAM) form a helical membrane-spanning segment. At 231 to 270 (TSGQMWNHIRGPPYAHKNPHTGHVNYIHGSSQAQFVAETH) the chain is on the extracellular side. Residues 271–291 (IVLLFNGGVTLGMVLLCEAAT) traverse the membrane as a helical segment. Residues 292–300 (SDMDIGKRK) lie on the Cytoplasmic side of the membrane. The chain crosses the membrane as a helical span at residues 301–321 (IMCVAGIGLVVLFFSWMLSIF). The Extracellular segment spans residues 322 to 335 (RSKYHGYPYSFLMS).

It belongs to the OST3/OST6 family. As to quaternary structure, accessory component of the STT3B-containing form of the oligosaccharyltransferase (OST) complex. OST exists in two different complex forms which contain common core subunits RPN1, RPN2, OST48, OST4, DAD1 and TMEM258, either STT3A or STT3B as catalytic subunits, and form-specific accessory subunits. OST can form stable complexes with the Sec61 complex or with both the Sec61 and TRAP complexes. The association of TUSC3 or MAGT1 with the STT3B-containing complex seems to be mutually exclusvice. In terms of tissue distribution, ubiquitous. Expressed at very low levels in brain, lung and kidney.

It is found in the cell membrane. The protein localises to the endoplasmic reticulum. Its subcellular location is the endoplasmic reticulum membrane. The protein operates within protein modification; protein glycosylation. In terms of biological role, accessory component of the STT3B-containing form of the N-oligosaccharyl transferase (OST) complex which catalyzes the transfer of a high mannose oligosaccharide from a lipid-linked oligosaccharide donor to an asparagine residue within an Asn-X-Ser/Thr consensus motif in nascent polypeptide chains. Involved in N-glycosylation of STT3B-dependent substrates. Specifically required for the glycosylation of a subset of acceptor sites that are near cysteine residues; in this function seems to act redundantly with TUSC3. In its oxidized form proposed to form transient mixed disulfides with a glycoprotein substrate to facilitate access of STT3B to the unmodified acceptor site. Also has oxidoreductase-independent functions in the STT3B-containing OST complex possibly involving substrate recognition. Could indirectly play a role in Mg(2+) transport in epithelial cells. The polypeptide is Dolichyl-diphosphooligosaccharide--protein glycosyltransferase subunit MAGT1 (Homo sapiens (Human)).